The following is a 106-amino-acid chain: Large ribosomal subunit protein bL21 (106 aa).

The protein belongs to the bacterial ribosomal protein bL21 family. As to quaternary structure, part of the 50S ribosomal subunit. Contacts protein L20.

Functionally, this protein binds to 23S rRNA in the presence of protein L20. The polypeptide is Large ribosomal subunit protein bL21 (Xylella fastidiosa (strain Temecula1 / ATCC 700964)).